We begin with the raw amino-acid sequence, 126 residues long: Aspartate 1-decarboxylase (126 aa).

Serine 25 (schiff-base intermediate with substrate; via pyruvic acid) is an active-site residue. Residue serine 25 is modified to Pyruvic acid (Ser). Threonine 57 contacts substrate. The active-site Proton donor is the tyrosine 58. 73-75 (GAA) provides a ligand contact to substrate.

It belongs to the PanD family. Heterooctamer of four alpha and four beta subunits. Requires pyruvate as cofactor. Post-translationally, is synthesized initially as an inactive proenzyme, which is activated by self-cleavage at a specific serine bond to produce a beta-subunit with a hydroxyl group at its C-terminus and an alpha-subunit with a pyruvoyl group at its N-terminus.

It is found in the cytoplasm. It catalyses the reaction L-aspartate + H(+) = beta-alanine + CO2. It functions in the pathway cofactor biosynthesis; (R)-pantothenate biosynthesis; beta-alanine from L-aspartate: step 1/1. In terms of biological role, catalyzes the pyruvoyl-dependent decarboxylation of aspartate to produce beta-alanine. The sequence is that of Aspartate 1-decarboxylase from Halorhodospira halophila (strain DSM 244 / SL1) (Ectothiorhodospira halophila (strain DSM 244 / SL1)).